The primary structure comprises 107 residues: ATPase inhibitor, mitochondrial (107 aa).

Residues 1 to 25 (MAGSALAVRARLGVWGMRVLQTRGF) constitute a mitochondrion transit peptide. A disordered region spans residues 25–58 (FGSDSSESMDSGAGSIREAGGAFGKREKAEEDRY). The N-terminal inhibitory region stretch occupies residues 26–52 (GSDSSESMDSGAGSIREAGGAFGKREK). The residue at position 39 (Ser39) is a Phosphoserine. Positions 48–58 (GKREKAEEDRY) are enriched in basic and acidic residues. The stretch at 60-107 (REKTREQLAALKKHHEDEIDHHSKEIERLQKQIERHKKKIKYLKNSEH) forms a coiled coil. The tract at residues 74 to 106 (HEDEIDHHSKEIERLQKQIERHKKKIKYLKNSE) is antiparallel alpha-helical coiled coil region. Lys103 is subject to N6-succinyllysine.

It belongs to the ATPase inhibitor family. Homodimer; represents the active form and is present at a pH value below 6.5. Homotetramer; represents the inactive form and is present at a pH value above 7.0.

The protein resides in the mitochondrion. In terms of biological role, endogenous F(1)F(o)-ATPase inhibitor limiting ATP depletion when the mitochondrial membrane potential falls below a threshold and the F(1)F(o)-ATP synthase starts hydrolyzing ATP to pump protons out of the mitochondrial matrix. Required to avoid the consumption of cellular ATP when the F(1)F(o)-ATP synthase enzyme acts as an ATP hydrolase. Indirectly acts as a regulator of heme synthesis in erythroid tissues: regulates heme synthesis by modulating the mitochondrial pH and redox potential, allowing FECH to efficiently catalyze the incorporation of iron into protoporphyrin IX to produce heme. The protein is ATPase inhibitor, mitochondrial of Rattus norvegicus (Rat).